The sequence spans 273 residues: Aliphatic sulfonates import ATP-binding protein SsuB 2 (273 aa).

The region spanning 17–241 is the ABC transporter domain; sequence LLDLRITRKL…PRDRRDPTLA (225 aa). 50–57 contacts ATP; sequence GPSGCGKS.

This sequence belongs to the ABC transporter superfamily. Aliphatic sulfonates importer (TC 3.A.1.17.2) family. The complex is composed of two ATP-binding proteins (SsuB), two transmembrane proteins (SsuC) and a solute-binding protein (SsuA).

Its subcellular location is the cell inner membrane. It catalyses the reaction ATP + H2O + aliphatic sulfonate-[sulfonate-binding protein]Side 1 = ADP + phosphate + aliphatic sulfonateSide 2 + [sulfonate-binding protein]Side 1.. Functionally, part of the ABC transporter complex SsuABC involved in aliphatic sulfonates import. Responsible for energy coupling to the transport system. This is Aliphatic sulfonates import ATP-binding protein SsuB 2 from Burkholderia lata (strain ATCC 17760 / DSM 23089 / LMG 22485 / NCIMB 9086 / R18194 / 383).